The chain runs to 303 residues: Probable 5-dehydro-4-deoxyglucarate dehydratase (303 aa).

Belongs to the DapA family.

It carries out the reaction 5-dehydro-4-deoxy-D-glucarate + H(+) = 2,5-dioxopentanoate + CO2 + H2O. The protein operates within carbohydrate acid metabolism; D-glucarate degradation; 2,5-dioxopentanoate from D-glucarate: step 2/2. In Leptothrix cholodnii (strain ATCC 51168 / LMG 8142 / SP-6) (Leptothrix discophora (strain SP-6)), this protein is Probable 5-dehydro-4-deoxyglucarate dehydratase.